We begin with the raw amino-acid sequence, 308 residues long: UDP-3-O-acyl-N-acetylglucosamine deacetylase (308 aa).

Residues His-77, His-233, and Asp-237 each coordinate Zn(2+). The active-site Proton donor is the His-260.

The protein belongs to the LpxC family. The cofactor is Zn(2+).

The enzyme catalyses a UDP-3-O-[(3R)-3-hydroxyacyl]-N-acetyl-alpha-D-glucosamine + H2O = a UDP-3-O-[(3R)-3-hydroxyacyl]-alpha-D-glucosamine + acetate. It functions in the pathway glycolipid biosynthesis; lipid IV(A) biosynthesis; lipid IV(A) from (3R)-3-hydroxytetradecanoyl-[acyl-carrier-protein] and UDP-N-acetyl-alpha-D-glucosamine: step 2/6. Functionally, catalyzes the hydrolysis of UDP-3-O-myristoyl-N-acetylglucosamine to form UDP-3-O-myristoylglucosamine and acetate, the committed step in lipid A biosynthesis. The chain is UDP-3-O-acyl-N-acetylglucosamine deacetylase from Nitratidesulfovibrio vulgaris (strain ATCC 29579 / DSM 644 / CCUG 34227 / NCIMB 8303 / VKM B-1760 / Hildenborough) (Desulfovibrio vulgaris).